The following is a 158-amino-acid chain: Ribosomal RNA large subunit methyltransferase H (158 aa).

S-adenosyl-L-methionine is bound by residues Leu-74, Gly-105, and 124–129 (LGPLTL).

It belongs to the RNA methyltransferase RlmH family. In terms of assembly, homodimer.

It is found in the cytoplasm. The catalysed reaction is pseudouridine(1915) in 23S rRNA + S-adenosyl-L-methionine = N(3)-methylpseudouridine(1915) in 23S rRNA + S-adenosyl-L-homocysteine + H(+). In terms of biological role, specifically methylates the pseudouridine at position 1915 (m3Psi1915) in 23S rRNA. The protein is Ribosomal RNA large subunit methyltransferase H of Xylella fastidiosa (strain 9a5c).